The sequence spans 983 residues: Type IV secretion system protein CagE (983 aa).

597 to 604 (GSTGSGKT) is a binding site for ATP.

Belongs to the TrbE/VirB4 family. Component of the Cag type IV secretion system, which is composed of a wheel-shaped outer membrane complex (OMC) and an inner membrane complex (IMC). Interacts with CagV and CagBeta.

The protein resides in the cell inner membrane. The catalysed reaction is ATP + H2O + cellular proteinSide 1 = ADP + phosphate + cellular proteinSide 2.. ATPase component of the type IV secretion system Cag (Cag-T4SS). Acts as a molecular motor to provide the energy that is required for the export of proteins. Required for CagA translocation and induction of IL-8 in host gastric epithelial cells. Plays a key role in Cag-T4SS pilus biogenesis, especially in the localization and stabilization of the pilus-associated components CagI, CagL and the surface protein CagH. Is also critical for assembly of the entire cytoplasmic portion of the Cag inner membrane complex (IMC). This is Type IV secretion system protein CagE from Helicobacter pylori (strain ATCC 700392 / 26695) (Campylobacter pylori).